The sequence spans 168 residues: Small ribosomal subunit protein uS5 (168 aa).

In terms of domain architecture, S5 DRBM spans 14-77; that stretch reads FEERVVSINR…EAAKKNLITV (64 aa).

It belongs to the universal ribosomal protein uS5 family. In terms of assembly, part of the 30S ribosomal subunit. Contacts proteins S4 and S8.

Functionally, with S4 and S12 plays an important role in translational accuracy. Its function is as follows. Located at the back of the 30S subunit body where it stabilizes the conformation of the head with respect to the body. This chain is Small ribosomal subunit protein uS5, found in Lactococcus lactis subsp. cremoris (strain MG1363).